The following is a 374-amino-acid chain: Protein RecA (374 aa).

77 to 84 (GPESSGKT) serves as a coordination point for ATP. Residues 355–374 (AAKTAAADKSAPAKASEAAA) are disordered.

This sequence belongs to the RecA family.

The protein localises to the cytoplasm. In terms of biological role, can catalyze the hydrolysis of ATP in the presence of single-stranded DNA, the ATP-dependent uptake of single-stranded DNA by duplex DNA, and the ATP-dependent hybridization of homologous single-stranded DNAs. It interacts with LexA causing its activation and leading to its autocatalytic cleavage. In Synechococcus sp. (strain CC9605), this protein is Protein RecA.